Reading from the N-terminus, the 387-residue chain is Large ribosomal subunit protein uL3 (387 aa).

A Phosphoserine modification is found at Ser-24. Lys-39 is covalently cross-linked (Glycyl lysine isopeptide (Lys-Gly) (interchain with G-Cter in ubiquitin)). Phosphothreonine is present on Thr-103. Residue Lys-136 forms a Glycyl lysine isopeptide (Lys-Gly) (interchain with G-Cter in ubiquitin) linkage. Ser-156 is subject to Phosphoserine. Pros-methylhistidine is present on His-243. Ser-297 carries the phosphoserine modification.

This sequence belongs to the universal ribosomal protein uL3 family. As to quaternary structure, component of the large ribosomal subunit (LSU). Mature yeast ribosomes consist of a small (40S) and a large (60S) subunit. The 40S small subunit contains 1 molecule of ribosomal RNA (18S rRNA) and 33 different proteins (encoded by 57 genes). The large 60S subunit contains 3 rRNA molecules (25S, 5.8S and 5S rRNA) and 46 different proteins (encoded by 81 genes). uL3 forms together with ES39L one of the contact sites for the signal recognition particle that targets ribosomes to the endoplasmic reticulum membrane. Methylation at His-243 by HPM1 is required for proper 60S subunit assembly and promotes translational elongation fidelity.

It is found in the cytoplasm. Component of the ribosome, a large ribonucleoprotein complex responsible for the synthesis of proteins in the cell. The small ribosomal subunit (SSU) binds messenger RNAs (mRNAs) and translates the encoded message by selecting cognate aminoacyl-transfer RNA (tRNA) molecules. The large subunit (LSU) contains the ribosomal catalytic site termed the peptidyl transferase center (PTC), which catalyzes the formation of peptide bonds, thereby polymerizing the amino acids delivered by tRNAs into a polypeptide chain. The nascent polypeptides leave the ribosome through a tunnel in the LSU and interact with protein factors that function in enzymatic processing, targeting, and the membrane insertion of nascent chains at the exit of the ribosomal tunnel. uL3 plays a role in coordinating processes of accommodating the aminoacyl-tRNA in the PTC. The chain is Large ribosomal subunit protein uL3 from Saccharomyces cerevisiae (strain ATCC 204508 / S288c) (Baker's yeast).